Consider the following 343-residue polypeptide: N-acetyl-gamma-glutamyl-phosphate reductase (343 aa).

The active site involves Cys149.

The protein belongs to the NAGSA dehydrogenase family. Type 1 subfamily.

It localises to the cytoplasm. The enzyme catalyses N-acetyl-L-glutamate 5-semialdehyde + phosphate + NADP(+) = N-acetyl-L-glutamyl 5-phosphate + NADPH + H(+). Its pathway is amino-acid biosynthesis; L-arginine biosynthesis; N(2)-acetyl-L-ornithine from L-glutamate: step 3/4. Its function is as follows. Catalyzes the NADPH-dependent reduction of N-acetyl-5-glutamyl phosphate to yield N-acetyl-L-glutamate 5-semialdehyde. This chain is N-acetyl-gamma-glutamyl-phosphate reductase, found in Methanococcus maripaludis (strain C7 / ATCC BAA-1331).